We begin with the raw amino-acid sequence, 340 residues long: Replication factor C subunit 2 (340 aa).

59-66 provides a ligand contact to ATP; that stretch reads GSPGTGKT.

Belongs to the activator 1 small subunits family. Heteropentamer of subunits rfc1, rfc2, rfc3, rfc4 and rfc5 that forms a complex (RFC) with PCNA in the presence of ATP. Two other complexes exist where rfc1 can be replaced by either ctf18 or elg1 to form the ctf18-RFC or the elg1-RFC complexes respectively.

It is found in the nucleus. Functionally, the elongation of primed DNA templates by DNA polymerase delta and epsilon requires the action of the accessory proteins PCNA and activator 1. Subunit 2 binds ATP and single-stranded DNA. The protein is Replication factor C subunit 2 (rfc2) of Schizosaccharomyces pombe (strain 972 / ATCC 24843) (Fission yeast).